The following is a 453-amino-acid chain: Bifunctional protein GlmU (453 aa).

The pyrophosphorylase stretch occupies residues 1 to 226 (MKFSTVILAA…SIEVEGVNDR (226 aa)). UDP-N-acetyl-alpha-D-glucosamine-binding positions include 8–11 (LAAG), K22, Q73, 78–79 (GT), 100–102 (YGD), G137, E151, N166, and N224. D102 provides a ligand contact to Mg(2+). N224 lines the Mg(2+) pocket. The interval 227–247 (IQLARLERAFQARQAKKLLEQ) is linker. Residues 248–453 (GVMLRDPARF…AGWQRPAKKK (206 aa)) are N-acetyltransferase. R330 and K348 together coordinate UDP-N-acetyl-alpha-D-glucosamine. The active-site Proton acceptor is H360. Positions 363 and 374 each coordinate UDP-N-acetyl-alpha-D-glucosamine. Acetyl-CoA-binding positions include A377, 383–384 (NY), S402, A420, and R437.

This sequence in the N-terminal section; belongs to the N-acetylglucosamine-1-phosphate uridyltransferase family. The protein in the C-terminal section; belongs to the transferase hexapeptide repeat family. Homotrimer. It depends on Mg(2+) as a cofactor.

It localises to the cytoplasm. It catalyses the reaction alpha-D-glucosamine 1-phosphate + acetyl-CoA = N-acetyl-alpha-D-glucosamine 1-phosphate + CoA + H(+). It carries out the reaction N-acetyl-alpha-D-glucosamine 1-phosphate + UTP + H(+) = UDP-N-acetyl-alpha-D-glucosamine + diphosphate. Its pathway is nucleotide-sugar biosynthesis; UDP-N-acetyl-alpha-D-glucosamine biosynthesis; N-acetyl-alpha-D-glucosamine 1-phosphate from alpha-D-glucosamine 6-phosphate (route II): step 2/2. It functions in the pathway nucleotide-sugar biosynthesis; UDP-N-acetyl-alpha-D-glucosamine biosynthesis; UDP-N-acetyl-alpha-D-glucosamine from N-acetyl-alpha-D-glucosamine 1-phosphate: step 1/1. The protein operates within bacterial outer membrane biogenesis; LPS lipid A biosynthesis. Catalyzes the last two sequential reactions in the de novo biosynthetic pathway for UDP-N-acetylglucosamine (UDP-GlcNAc). The C-terminal domain catalyzes the transfer of acetyl group from acetyl coenzyme A to glucosamine-1-phosphate (GlcN-1-P) to produce N-acetylglucosamine-1-phosphate (GlcNAc-1-P), which is converted into UDP-GlcNAc by the transfer of uridine 5-monophosphate (from uridine 5-triphosphate), a reaction catalyzed by the N-terminal domain. This Vibrio cholerae serotype O1 (strain ATCC 39541 / Classical Ogawa 395 / O395) protein is Bifunctional protein GlmU.